A 248-amino-acid chain; its full sequence is Flavodoxin/ferredoxin--NADP reductase (248 aa).

The FAD-binding FR-type domain maps to 2-101 (ADWVTGKVTK…SEAAGFFVLD (100 aa)). FAD is bound by residues 50–53 (RAYS), Tyr-66, 74–76 (KLS), and Thr-116. Residues 143-144 (AR), 173-174 (SR), Arg-184, 214-216 (NPQ), and Asp-220 each bind NADP(+). 247–248 (YW) contributes to the FAD binding site.

It belongs to the ferredoxin--NADP reductase type 1 family. It depends on FAD as a cofactor.

It localises to the cytoplasm. It catalyses the reaction 2 reduced [2Fe-2S]-[ferredoxin] + NADP(+) + H(+) = 2 oxidized [2Fe-2S]-[ferredoxin] + NADPH. The catalysed reaction is reduced [flavodoxin] + NADP(+) = oxidized [flavodoxin] + NADPH + 2 H(+). In terms of biological role, transports electrons between flavodoxin or ferredoxin and NADPH. The polypeptide is Flavodoxin/ferredoxin--NADP reductase (fpr) (Shigella flexneri).